The sequence spans 296 residues: tRNA dimethylallyltransferase (296 aa).

Position 2 to 9 (2 to 9 (GPTASGKT)) interacts with ATP. 4 to 9 (TASGKT) provides a ligand contact to substrate. 3 interaction with substrate tRNA regions span residues 27–30 (DSAL), 151–155 (QRLSR), and 232–237 (RCVGYR).

The protein belongs to the IPP transferase family. In terms of assembly, monomer. It depends on Mg(2+) as a cofactor.

The catalysed reaction is adenosine(37) in tRNA + dimethylallyl diphosphate = N(6)-dimethylallyladenosine(37) in tRNA + diphosphate. Functionally, catalyzes the transfer of a dimethylallyl group onto the adenine at position 37 in tRNAs that read codons beginning with uridine, leading to the formation of N6-(dimethylallyl)adenosine (i(6)A). The sequence is that of tRNA dimethylallyltransferase from Shewanella baltica (strain OS155 / ATCC BAA-1091).